A 1700-amino-acid polypeptide reads, in one-letter code: Ras-responsive element-binding protein 1 (1700 aa).

Positions 31 to 63 are disordered; that stretch reads TENGGSPQGIKSPMKPPGPNRIGRRNQETKEEK. 2 positions are modified to phosphoserine: Ser-36 and Ser-42. C2H2-type zinc fingers lie at residues 66-88, 97-119, and 125-147; these read YNCP…IRQH, HACS…MLVH, and YKCT…MKIH. The disordered stretch occupies residues 146–195; it reads IHEKDTNSTTAAAPPSPLKRRRLSSKRKLSHDAESEDPGPAKKMVEDGQS. A Phosphoserine modification is found at Ser-161. Basic residues predominate over residues 163-174; sequence LKRRRLSSKRKL. Residues Ser-175 and Ser-180 each carry the phosphoserine modification. Over residues 184–195 the composition is skewed to basic and acidic residues; it reads GPAKKMVEDGQS. The C2H2-type 4 zinc finger occupies 206 to 228; sequence FHCPVCFKEFVCKYELETHMETH. Ser-229 is modified (phosphoserine). 2 consecutive C2H2-type zinc fingers follow at residues 233 to 256 and 314 to 336; these read LRCD…ALVH and FVCD…RQSH. Residues Lys-433, Lys-500, Lys-549, Lys-564, Lys-591, and Lys-611 each participate in a glycyl lysine isopeptide (Lys-Gly) (interchain with G-Cter in SUMO2) cross-link. Lys-613 participates in a covalent cross-link: Glycyl lysine isopeptide (Lys-Gly) (interchain with G-Cter in SUMO1); alternate. Residue Lys-613 forms a Glycyl lysine isopeptide (Lys-Gly) (interchain with G-Cter in SUMO2); alternate linkage. A Glycyl lysine isopeptide (Lys-Gly) (interchain with G-Cter in SUMO2) cross-link involves residue Lys-622. C2H2-type zinc fingers lie at residues 641–663, 669–691, 697–720, 751–782, and 788–813; these read YPCR…VRSH, YQCN…IRTH, YICK…RKKH, TVCR…GGCH, and FECK…QHLH. Residues Lys-855, Lys-883, and Lys-911 each participate in a glycyl lysine isopeptide (Lys-Gly) (interchain with G-Cter in SUMO2) cross-link. 2 disordered regions span residues 939 to 991 and 1092 to 1177; these read IPKS…SLET and ADPG…AVDL. The span at 944-961 shows a compositional bias: basic and acidic residues; the sequence is KKGDKDTVVPSDAKKPEP. Ser-970 carries the phosphoserine modification. A compositionally biased stretch (polar residues) spans 1097 to 1111; the sequence is SITSSNTVATDSPGS. 3 positions are modified to phosphoserine: Ser-1125, Ser-1137, and Ser-1138. The span at 1137 to 1146 shows a compositional bias: low complexity; sequence SSPEEALPTE. The span at 1155–1165 shows a compositional bias: basic residues; that stretch reads SRKRGRKRGLR. 4 positions are modified to phosphoserine: Ser-1172, Ser-1179, Ser-1180, and Ser-1230. Disordered regions lie at residues 1195-1235, 1273-1368, 1383-1521, and 1564-1670; these read TNKF…AEDR, HTDS…QSLD, SEAG…RKKV, and VRHQ…SPAA. A C2H2-type 12 zinc finger spans residues 1251–1273; the sequence is INCPHCPRVFPWASSLQRHMLTH. Over residues 1273–1285 the composition is skewed to low complexity; sequence HTDSQSDTDTLTT. The span at 1327–1346 shows a compositional bias: acidic residues; it reads SEEEEEKETEENPEPEEECR. The C2H2-type 13 zinc finger occupies 1400–1422; it reads HACDTCGKNFKFLGTLSRHKKAH. 2 positions are modified to phosphoserine: Ser-1450 and Ser-1452. Basic and acidic residues predominate over residues 1492–1507; sequence TAEKRGDGDKRPKTDS. 2 C2H2-type zinc fingers span residues 1520–1542 and 1548–1570; these read KVCS…MRSH and YKCQ…QRIH. Over residues 1564–1580 the composition is skewed to basic residues; it reads VRHQRIHQKARHSKHHG. 2 positions are modified to phosphoserine: Ser-1593 and Ser-1606. Positions 1645–1660 are enriched in low complexity; that stretch reads AEQAAEPSAPKEQASP. A Phosphoserine modification is found at Ser-1667.

This sequence belongs to the krueppel C2H2-type zinc-finger protein family. As to quaternary structure, interacts with NEUROD1. Interacts with AR. Expressed in splenic B-cells.

It is found in the nucleus speckle. Transcription factor that binds specifically to the RAS-responsive elements (RRE) of gene promoters. Represses the angiotensinogen gene. Negatively regulates the transcriptional activity of AR. Potentiates the transcriptional activity of NEUROD1. Binds specifically to the allelic variant of the CDKN2A promoter present in Balb/c mice, which leads to a down-regulation of CDKN2A expression in this strain, and, as a consequence, to an elevated susceptibility to pristane-induced tumors. Promotes brown adipocyte differentiation. May be involved in Ras/Raf-mediated cell differentiation by enhancing calcitonin expression. The polypeptide is Ras-responsive element-binding protein 1 (Rreb1) (Mus musculus (Mouse)).